Reading from the N-terminus, the 490-residue chain is Arginine decarboxylase (490 aa).

K226 carries the post-translational modification N6-(pyridoxal phosphate)lysine.

It belongs to the Orn/Lys/Arg decarboxylase class-I family. Requires pyridoxal 5'-phosphate as cofactor.

It localises to the cytoplasm. The enzyme catalyses L-arginine + H(+) = agmatine + CO2. It functions in the pathway amine and polyamine biosynthesis; agmatine biosynthesis; agmatine from L-arginine: step 1/1. Its function is as follows. Catalyzes the formation of agmatine from arginine. This Bacillus subtilis (strain 168) protein is Arginine decarboxylase (speA).